We begin with the raw amino-acid sequence, 621 residues long: Chaperone protein HtpG (621 aa).

Residues 1–341 form an a; substrate-binding region; that stretch reads MSNQEYTFQT…SEDLPLNVSR (341 aa). A b region spans residues 342–547; the sequence is EILQQNKILA…GDEQNAMMAN (206 aa). The c stretch occupies residues 548–621; that stretch reads WMRQMGQSVP…RLNSVLLKAL (74 aa).

It belongs to the heat shock protein 90 family. As to quaternary structure, homodimer.

The protein localises to the cytoplasm. Its function is as follows. Molecular chaperone. Has ATPase activity. This Helicobacter pylori (strain ATCC 700392 / 26695) (Campylobacter pylori) protein is Chaperone protein HtpG.